The primary structure comprises 318 residues: Ribosomal RNA small subunit methyltransferase H (318 aa).

Residues 38-40 (AGH), aspartate 57, leucine 91, aspartate 105, and glutamine 112 each bind S-adenosyl-L-methionine.

This sequence belongs to the methyltransferase superfamily. RsmH family.

The protein resides in the cytoplasm. The catalysed reaction is cytidine(1402) in 16S rRNA + S-adenosyl-L-methionine = N(4)-methylcytidine(1402) in 16S rRNA + S-adenosyl-L-homocysteine + H(+). Functionally, specifically methylates the N4 position of cytidine in position 1402 (C1402) of 16S rRNA. This Clavibacter sepedonicus (Clavibacter michiganensis subsp. sepedonicus) protein is Ribosomal RNA small subunit methyltransferase H.